Here is a 539-residue protein sequence, read N- to C-terminus: uncharacterized protein (539 aa).

Residues 316-433 (AEHHHQKGKK…ATVERSSPPE (118 aa)) form a disordered region. Residues 318–352 (HHHQKGKKVPATHRRSSTPHARKTAGTRARTRARK) show a composition bias toward basic residues. Positions 362–384 (KISKKDSGESKQKDETAGMERVF) are enriched in basic and acidic residues. Residues 390–402 (NVRTCSSRASRTG) are compositionally biased toward polar residues.

This is an uncharacterized protein from Treponema pallidum (strain Nichols).